Here is a 48-residue protein sequence, read N- to C-terminus: Cuticle protein 5.1 (48 aa).

Functionally, component of the cuticle of migratory locust which contains more than 100 different structural proteins. The protein is Cuticle protein 5.1 of Locusta migratoria (Migratory locust).